A 123-amino-acid polypeptide reads, in one-letter code: Ribosome-binding factor A (123 aa).

It belongs to the RbfA family. In terms of assembly, monomer. Binds 30S ribosomal subunits, but not 50S ribosomal subunits or 70S ribosomes.

It is found in the cytoplasm. Its function is as follows. One of several proteins that assist in the late maturation steps of the functional core of the 30S ribosomal subunit. Associates with free 30S ribosomal subunits (but not with 30S subunits that are part of 70S ribosomes or polysomes). Required for efficient processing of 16S rRNA. May interact with the 5'-terminal helix region of 16S rRNA. The protein is Ribosome-binding factor A of Geotalea daltonii (strain DSM 22248 / JCM 15807 / FRC-32) (Geobacter daltonii).